A 528-amino-acid chain; its full sequence is Cytochrome P450 monooxygenase polB (528 aa).

The helical transmembrane segment at 3-23 (SFFLVCPVAFLGFTICYLVYV) threads the bilayer. Heme is bound at residue cysteine 473.

The protein belongs to the cytochrome P450 family. The cofactor is heme.

It localises to the membrane. The catalysed reaction is 4beta-carboxyl motiol + reduced [NADPH--hemoprotein reductase] + O2 = 2alpha-hydroxyl, 4beta-carboxyl motiol + oxidized [NADPH--hemoprotein reductase] + H2O + H(+). The enzyme catalyses 2-deoxypolytolypin + reduced [NADPH--hemoprotein reductase] + O2 = polytolypin + oxidized [NADPH--hemoprotein reductase] + H2O + H(+). The protein operates within secondary metabolite biosynthesis; terpenoid biosynthesis. Its function is as follows. Cytochrome P450 monooxygenase; part of the gene cluster that mediates the biosynthesis of antifungal fernane-type triterpenoid polytolypin. PolB acts as a hydroxylase and installs the 2-alpha-hydroxyl group in polytolypin. Within the pathway, the triterpene cyclase polA first catalyzes the cyclization of 2,3-oxidosqualene to motiol, polC converts the 4-alpha-methyl group of motiol to a carboxyl group, polB is responsible for appending a hydroxyl group at the 2-alpha position and polE is a dual functional P450, which can catalyze the formation of both the 1-beta-hydroxyl group and 10-beta-carboxyl group. The protein is Cytochrome P450 monooxygenase polB of Polytolypa hystricis (strain UAMH7299).